The sequence spans 963 residues: Integrator complex subunit 4 (963 aa).

Lys26 carries the N6-acetyllysine modification. 8 HEAT repeats span residues 66–105 (AESV…TAGF), 145–183 (QAIQ…LEKS), 190–228 (GLAA…RGLK), 229–263 (LHQT…SQLY), 277–313 (IRLV…EQVS), 369–405 (NLIE…AQSS), 406–444 (PSFA…NITL), and 446–484 (EDQL…GIHL). Lys791 participates in a covalent cross-link: Glycyl lysine isopeptide (Lys-Gly) (interchain with G-Cter in SUMO1); alternate. Residue Lys791 forms a Glycyl lysine isopeptide (Lys-Gly) (interchain with G-Cter in SUMO2); alternate linkage.

The protein belongs to the Integrator subunit 4 family. In terms of assembly, component of the Integrator complex, composed of core subunits INTS1, INTS2, INTS3, INTS4, INTS5, INTS6, INTS7, INTS8, INTS9/RC74, INTS10, INTS11/CPSF3L, INTS12, INTS13, INTS14 and INTS15. The core complex associates with protein phosphatase 2A subunits PPP2CA and PPP2R1A, to form the Integrator-PP2A (INTAC) complex. INTS4 is part of the RNA endonuclease subcomplex, composed of INTS4, INTS9, INTS11 and inositol hexakisphosphate (InsP6). Interacts with BRAT1; interaction is required for the assembly of the RNA endonuclease subcomplex.

Its subcellular location is the nucleus. The protein resides in the cytoplasm. Its function is as follows. Component of the integrator complex, a multiprotein complex that terminates RNA polymerase II (Pol II) transcription in the promoter-proximal region of genes. The integrator complex provides a quality checkpoint during transcription elongation by driving premature transcription termination of transcripts that are unfavorably configured for transcriptional elongation: the complex terminates transcription by (1) catalyzing dephosphorylation of the C-terminal domain (CTD) of Pol II subunit POLR2A/RPB1 and SUPT5H/SPT5, (2) degrading the exiting nascent RNA transcript via endonuclease activity and (3) promoting the release of Pol II from bound DNA. The integrator complex is also involved in terminating the synthesis of non-coding Pol II transcripts, such as enhancer RNAs (eRNAs), small nuclear RNAs (snRNAs), telomerase RNAs and long non-coding RNAs (lncRNAs). Within the integrator complex, INTS4 acts as an scaffold that links INTS9 and INTS11. Mediates recruitment of cytoplasmic dynein to the nuclear envelope, probably as component of the integrator complex. The polypeptide is Integrator complex subunit 4 (Homo sapiens (Human)).